Reading from the N-terminus, the 431-residue chain is MSIITDILGREVLDSRGNPTVEVEVYTEDGGFGRAIVPSGASTGEHEAVELRDGDKSRFGGKGVLKAVENVNGPLAKEIVGFDTTDQRGIDAAMIKLDGTENKGKLGANAILGVSLAAARAAADELGLPLYEYLGGPNAHVLPTPMMNVINGGAHSDNKVDFQEFMIMPVGAKSVREAIRMGSETFQALKSLLSADGKVTSVGDEGGFAPDFANNEEPLQYLIKAIEKAGYKAGEDISIAIDVASSELWNNEDKTYKLRWSTGEEFTTPEFVKYLEGLVAKYPIISIEDPIDENNWEDWASITKELGEKVQLVGDDFFVTNTDYLRKGIKMGAANSILVKVNQIGTLTESLEAIEMAKEAGYTAVVSHRSGETEDTTIADLVVATNAGQIKTGSMSRTDRLAKYNQLMRIEEQLGDTASYKGINSFYNIKK.

Gln163 is a binding site for (2R)-2-phosphoglycerate. The Proton donor role is filled by Glu205. Positions 242, 288, and 315 each coordinate Mg(2+). (2R)-2-phosphoglycerate-binding residues include Lys340, Arg369, Ser370, and Lys391. Lys340 functions as the Proton acceptor in the catalytic mechanism.

Belongs to the enolase family. Mg(2+) serves as cofactor.

It localises to the cytoplasm. The protein localises to the secreted. It is found in the cell surface. The catalysed reaction is (2R)-2-phosphoglycerate = phosphoenolpyruvate + H2O. Its pathway is carbohydrate degradation; glycolysis; pyruvate from D-glyceraldehyde 3-phosphate: step 4/5. In terms of biological role, catalyzes the reversible conversion of 2-phosphoglycerate (2-PG) into phosphoenolpyruvate (PEP). It is essential for the degradation of carbohydrates via glycolysis. The chain is Enolase from Latilactobacillus sakei subsp. sakei (strain 23K) (Lactobacillus sakei subsp. sakei).